A 206-amino-acid polypeptide reads, in one-letter code: Large ribosomal subunit protein uL4 (206 aa).

The segment at 46-77 is disordered; sequence GTRAQKDREQVKHSTKKPFKQKGTGNARAGMT.

Belongs to the universal ribosomal protein uL4 family. As to quaternary structure, part of the 50S ribosomal subunit.

Functionally, one of the primary rRNA binding proteins, this protein initially binds near the 5'-end of the 23S rRNA. It is important during the early stages of 50S assembly. It makes multiple contacts with different domains of the 23S rRNA in the assembled 50S subunit and ribosome. Its function is as follows. Forms part of the polypeptide exit tunnel. The chain is Large ribosomal subunit protein uL4 from Acidovorax ebreus (strain TPSY) (Diaphorobacter sp. (strain TPSY)).